The primary structure comprises 144 residues: 3-hydroxyacyl-[acyl-carrier-protein] dehydratase FabZ (144 aa).

His49 is an active-site residue.

The protein belongs to the thioester dehydratase family. FabZ subfamily.

The protein resides in the cytoplasm. The catalysed reaction is a (3R)-hydroxyacyl-[ACP] = a (2E)-enoyl-[ACP] + H2O. Its function is as follows. Involved in unsaturated fatty acids biosynthesis. Catalyzes the dehydration of short chain beta-hydroxyacyl-ACPs and long chain saturated and unsaturated beta-hydroxyacyl-ACPs. This is 3-hydroxyacyl-[acyl-carrier-protein] dehydratase FabZ from Clostridium kluyveri (strain NBRC 12016).